Consider the following 274-residue polypeptide: NADPH-dependent 7-cyano-7-deazaguanine reductase (274 aa).

Residues 1 to 33 are disordered; it reads MPKKDALDHLSLGQHTDYPNEYDPKQLQPVPRS. 84–86 provides a ligand contact to substrate; sequence IES. Position 86–87 (86–87) interacts with NADPH; that stretch reads SK. Cys183 serves as the catalytic Thioimide intermediate. Asp190 (proton donor) is an active-site residue. A substrate-binding site is contributed by 222-223; it reads HE. NADPH is bound at residue 250 to 251; it reads RG.

Belongs to the GTP cyclohydrolase I family. QueF type 2 subfamily. As to quaternary structure, homodimer.

The protein localises to the cytoplasm. The catalysed reaction is 7-aminomethyl-7-carbaguanine + 2 NADP(+) = 7-cyano-7-deazaguanine + 2 NADPH + 3 H(+). The protein operates within tRNA modification; tRNA-queuosine biosynthesis. Its function is as follows. Catalyzes the NADPH-dependent reduction of 7-cyano-7-deazaguanine (preQ0) to 7-aminomethyl-7-deazaguanine (preQ1). The sequence is that of NADPH-dependent 7-cyano-7-deazaguanine reductase from Idiomarina loihiensis (strain ATCC BAA-735 / DSM 15497 / L2-TR).